We begin with the raw amino-acid sequence, 762 residues long: Coleoptile phototropism protein 1 (762 aa).

The span at 1-12 (MWESESESHGGE) shows a compositional bias: basic and acidic residues. Residues 1–29 (MWESESESHGGERGLVPVGGGGGSGRHEA) form a disordered region. Positions 51–128 (SDLLVKVGDV…SYGMAVDLTA (78 aa)) constitute a BTB domain. The span at 227-238 (PAAIRGGGGSGG) shows a compositional bias: gly residues. Disordered stretches follow at residues 227 to 264 (PAAI…RQAV), 460 to 495 (MAVA…ASAS), 687 to 718 (QVDG…AWSS), and 731 to 762 (GADA…NSIS). Residues 268 to 607 (DWWFEDVSVL…VQVLFTEQVK (340 aa)) enclose the NPH3 domain. A coiled-coil region spans residues 654–691 (AAAKKDINTLKFELESMKAKYLELQHEMDALQKQVDGR). Residues 696-709 (PSPAAAKIGKQQQQ) show a composition bias toward low complexity. Gly residues predominate over residues 736–747 (AGGGVAPPGGGE). The span at 752–762 (KGPRRWRNSIS) shows a compositional bias: basic residues.

It belongs to the NPH3 family.

Its pathway is protein modification; protein ubiquitination. In terms of biological role, may act as a substrate-specific adapter of an E3 ubiquitin-protein ligase complex (CUL3-RBX1-BTB) which mediates the ubiquitination and subsequent proteasomal degradation of target proteins. Plays a role as signal transduction component in coleoptile phototropism and lateral translocation of auxin. This Oryza sativa subsp. japonica (Rice) protein is Coleoptile phototropism protein 1 (CPT1).